The following is a 404-amino-acid chain: Voltage-gated potassium channel subunit beta-3 (404 aa).

The segment covering 1–14 (MQVSIACTEQNLRS) has biased composition (polar residues). Positions 1-78 (MQVSIACTEQ…RESTGRGTGM (78 aa)) are disordered. Residues 28–50 (PGGGNGGPVGGGHGNPPGGGGLG) are compositionally biased toward gly residues. NADP(+) is bound by residues Thr-97, Trp-98, Gln-104, and Asp-126. The active-site Proton donor/acceptor is the Tyr-131. NADP(+) is bound by residues Asn-199, Ser-229, Arg-230, Gln-255, Trp-284, Ser-285, Pro-286, Leu-287, Ala-288, Cys-289, Lys-295, Lys-305, Gly-364, Ser-366, Gln-370, and Glu-373.

The protein belongs to the shaker potassium channel beta subunit family. In terms of assembly, forms heteromultimeric complex with alpha subunits. Interacts with KCNA5 and KCNB2. In terms of tissue distribution, predominantly expressed in brain. Strongest expression in olfactory bulb and thalamic nuclei. Not detected in heart, spleen, lung, liver, skeletal muscle, kidney and testis.

The protein resides in the cytoplasm. Functionally, regulatory subunit of the voltage-gated potassium (Kv) channels composed of pore-forming and potassium-conducting alpha subunits and of regulatory beta subunits. The beta-3/KCNAB3 subunit may mediate closure of potassium channels. Inactivates Kv1.4/KCNA4 alpha subunit-containing Kv channel current but not Kv1.1/KCNA1 or Kv1.5/KCNA5 channels. May display nicotinamide adenine dinucleotide phosphate (NADPH)-dependent aldoketoreductase activity. The binding of oxidized and reduced NADP(H) cofactors may be required for the regulation of potassium channel activity. The protein is Voltage-gated potassium channel subunit beta-3 of Rattus norvegicus (Rat).